The sequence spans 403 residues: Riboflavin biosynthesis protein RibBA (403 aa).

The DHBP synthase stretch occupies residues 1-204 (MKNKVFASIG…IGELVNYRRR (204 aa)). D-ribulose 5-phosphate is bound by residues 30-31 (RE), Asp35, 143-147 (RTGHT), and Glu167. Mg(2+) is bound at residue Glu31. Residue His146 coordinates Mg(2+). The interval 205 to 403 (TEKFISEIVN…EKMGHMLKKV (199 aa)) is GTP cyclohydrolase II. 255 to 259 (RVHSS) contributes to the GTP binding site. 3 residues coordinate Zn(2+): Cys260, Cys271, and Cys273. GTP is bound by residues Gln276, 298-300 (EGR), and Thr320. The active-site Proton acceptor; for GTP cyclohydrolase activity is Asp332. Arg334 (nucleophile; for GTP cyclohydrolase activity) is an active-site residue. Thr355 and Lys360 together coordinate GTP.

The protein in the N-terminal section; belongs to the DHBP synthase family. This sequence in the C-terminal section; belongs to the GTP cyclohydrolase II family. It depends on Mg(2+) as a cofactor. Mn(2+) is required as a cofactor. Zn(2+) serves as cofactor.

It catalyses the reaction D-ribulose 5-phosphate = (2S)-2-hydroxy-3-oxobutyl phosphate + formate + H(+). The enzyme catalyses GTP + 4 H2O = 2,5-diamino-6-hydroxy-4-(5-phosphoribosylamino)-pyrimidine + formate + 2 phosphate + 3 H(+). It functions in the pathway cofactor biosynthesis; riboflavin biosynthesis; 2-hydroxy-3-oxobutyl phosphate from D-ribulose 5-phosphate: step 1/1. It participates in cofactor biosynthesis; riboflavin biosynthesis; 5-amino-6-(D-ribitylamino)uracil from GTP: step 1/4. Its function is as follows. Catalyzes the conversion of D-ribulose 5-phosphate to formate and 3,4-dihydroxy-2-butanone 4-phosphate. In terms of biological role, catalyzes the conversion of GTP to 2,5-diamino-6-ribosylamino-4(3H)-pyrimidinone 5'-phosphate (DARP), formate and pyrophosphate. The polypeptide is Riboflavin biosynthesis protein RibBA (Endomicrobium trichonymphae).